A 449-amino-acid polypeptide reads, in one-letter code: Serum response factor homolog (449 aa).

The interval 23–166 (LADPADMYGN…PPANGKKTKG (144 aa)) is disordered. Positions 69–80 (QCQTLHSPQHAS) are enriched in polar residues. The segment covering 81–107 (QQQQQQQQQQQQHQQQQQQQQQHPQQQ) has biased composition (low complexity). Position 156 is a phosphoserine (S156). An MADS-box domain is found at 167–225 (RVKIKMEYIDNKLRRYTTFSKRKTGIMKKAYELSTLTGTQVMLLVASETGHVYTFATRK). Disordered regions lie at residues 270–360 (YNIA…GGGS) and 418–449 (LTAS…QEFD). 2 stretches are compositionally biased toward low complexity: residues 317–331 (SAPP…TASS) and 345–354 (TNSGPSTSTA).

After germ band retraction, high levels of zygotic expression are observed in a distinct subset of peripheral tracheal cells distributed throughout the embryo and low levels in somatic muscle. Expressed in the future intervein tissue of the wing imaginal disk from the third instar larvae until eclosion of the adult fly (at protein level).

The protein localises to the nucleus. Functionally, required for the formation of intervein tissue of the wing. Acts in a dosage-dependent manner to suppress wing vein formation and promote development of intervein cells. Might play a role in the proper formation and maintenance of the trachea. The protein is Serum response factor homolog (bs) of Drosophila melanogaster (Fruit fly).